A 160-amino-acid polypeptide reads, in one-letter code: Major pollen allergen Bet v 1-M/N (160 aa).

Lys55, Tyr82, Tyr84, and Asn101 together coordinate brassinolide.

The protein belongs to the BetVI family.

The protein resides in the cytoplasm. In terms of biological role, may be a general steroid carrier protein. The sequence is that of Major pollen allergen Bet v 1-M/N (BETV1M) from Betula pendula (European white birch).